The chain runs to 324 residues: Acetyl-coenzyme A carboxylase carboxyl transferase subunit alpha (324 aa).

The CoA carboxyltransferase C-terminal domain occupies 44–298; that stretch reads ILQRKLLNLK…KNKIRDQLDF (255 aa).

It belongs to the AccA family. In terms of assembly, acetyl-CoA carboxylase is a heterohexamer composed of biotin carboxyl carrier protein (accB), biotin carboxylase (accC) and two subunits each of ACCase subunit alpha (accA) and ACCase subunit beta (accD).

The protein localises to the plastid. The protein resides in the chloroplast. The catalysed reaction is N(6)-carboxybiotinyl-L-lysyl-[protein] + acetyl-CoA = N(6)-biotinyl-L-lysyl-[protein] + malonyl-CoA. It participates in lipid metabolism; malonyl-CoA biosynthesis; malonyl-CoA from acetyl-CoA: step 1/1. Functionally, component of the acetyl coenzyme A carboxylase (ACC) complex. First, biotin carboxylase catalyzes the carboxylation of biotin on its carrier protein (BCCP) and then the CO(2) group is transferred by the carboxyltransferase to acetyl-CoA to form malonyl-CoA. The protein is Acetyl-coenzyme A carboxylase carboxyl transferase subunit alpha of Cyanidium caldarium (Red alga).